A 421-amino-acid polypeptide reads, in one-letter code: Caspase-12 (421 aa).

The region spanning 1–92 (MADKKPSKED…QLSLEYQHES (92 aa)) is the CARD domain. Residue serine 85 is modified to Phosphoserine. The disordered stretch occupies residues 88-131 (YQHESEDQESEESSASSSSSTESEEENEESKDEERAASAHSMAV). The segment covering 109–118 (ESEEENEESK) has biased composition (acidic residues). Residues histidine 252 and cysteine 300 contribute to the active site.

Belongs to the peptidase C14A family. In terms of assembly, heterotetramer that consists of two anti-parallel arranged heterodimers, each one formed by two subunits (Potential). May interact with TRAF2.

Its function is as follows. Involved in the activation cascade of caspases responsible for apoptosis execution. The sequence is that of Caspase-12 from Macaca mulatta (Rhesus macaque).